A 124-amino-acid polypeptide reads, in one-letter code: Replication restart protein PriB (124 aa).

The SSB domain maps to 12–112 (IDNCLTLTGI…LHTEQIEFID (101 aa)).

Belongs to the PriB family. In terms of assembly, homodimer. Interacts with PriA and DnaT. Component of the replication restart primosome. Primosome assembly occurs via a 'hand-off' mechanism. PriA binds to replication forks, subsequently PriB then DnaT bind; DnaT then displaces ssDNA to generate the helicase loading substrate.

Involved in the restart of stalled replication forks, which reloads the replicative helicase on sites other than the origin of replication; the PriA-PriB pathway is the major replication restart pathway. During primosome assembly it facilitates complex formation between PriA and DnaT on DNA; stabilizes PriA on DNA. Stimulates the DNA unwinding activity of PriA helicase. The sequence is that of Replication restart protein PriB from Haemophilus ducreyi (strain 35000HP / ATCC 700724).